The primary structure comprises 493 residues: Solute carrier family 2, facilitated glucose transporter member 3 (493 aa).

At 1–10 the chain is on the cytoplasmic side; it reads MGTAKVTPSL. Residues 11 to 32 form a helical membrane-spanning segment; sequence VFAVTVATIGSFQFGYNTGVIN. Over 33–64 the chain is Extracellular; it reads APETIIKDFLNYTLEERLEDLPREGLLTTLWS. Asn-43 carries N-linked (GlcNAc...) asparagine glycosylation. Residues 65 to 85 traverse the membrane as a helical segment; sequence LCVAIFSVGGMIGSFSVGLFV. Residues 86–90 are Cytoplasmic-facing; that stretch reads NRFGR. Residues 91 to 111 traverse the membrane as a helical segment; sequence RNSMLLVNLIAILGGCLMGFA. Topologically, residues 112 to 118 are extracellular; it reads KIAESVE. The chain crosses the membrane as a helical span at residues 119–142; sequence MLILGRLIIGIFCGLCTGFVPMYI. Topologically, residues 143–153 are cytoplasmic; sequence GEVSPTALRGA. The helical transmembrane segment at 154-174 threads the bilayer; sequence FGTLNQLGIVVGILVAQVFGL. Position 159 (Gln-159) interacts with D-glucose. The Extracellular segment spans residues 175–183; the sequence is DFILGSEEL. Residues 184–204 form a helical membrane-spanning segment; that stretch reads WPGLLGLTIIPAILQSAALPF. Residues 205 to 269 lie on the Cytoplasmic side of the membrane; it reads CPESPRFLLI…LFKSPSYFQP (65 aa). Thr-232 bears the Phosphothreonine mark. The chain crosses the membrane as a helical span at residues 270–290; sequence LLISVVLQLSQQFSGINAVFY. The important for selectivity against fructose stretch occupies residues 277-279; sequence QLS. D-glucose contacts are provided by residues 280–281 and Asn-286; that span reads QQ. Residues 291–304 lie on the Extracellular side of the membrane; sequence YSTGIFQDAGVQEP. A helical membrane pass occupies residues 305–325; it reads IYATIGAGVVNTIFTVVSLFL. Residue Asn-315 participates in D-glucose binding. Over 326-331 the chain is Cytoplasmic; the sequence is VERAGR. The chain crosses the membrane as a helical span at residues 332 to 352; sequence RTLHMIGLGGMAVCSVFMTIS. The Extracellular segment spans residues 353–363; that stretch reads LLLKDEYEAMS. The chain crosses the membrane as a helical span at residues 364-389; it reads FVCIVAILVYVAFFEIGPGPIPWFIV. Glu-378 and Trp-386 together coordinate D-glucose. At 390–399 the chain is on the cytoplasmic side; sequence AELFSQGPRP. Residues 400–420 form a helical membrane-spanning segment; that stretch reads AAMAVAGCSNWTSNFLVGMFF. Residues 421–429 lie on the Extracellular side of the membrane; the sequence is PSAAAYLGA. Residues 430–450 form a helical membrane-spanning segment; it reads YVFIIFAAFLVFFLIFTSFKV. Over 451–493 the chain is Cytoplasmic; that stretch reads PETKGRTFEDITRAFEGQAHSGKGSAGVELNSMQPVKETPGNA. A phosphoserine mark is found at Ser-471, Ser-475, and Ser-482. At Thr-489 the chain carries Phosphothreonine.

Belongs to the major facilitator superfamily. Sugar transporter (TC 2.A.1.1) family. Glucose transporter subfamily. As to quaternary structure, interacts with SMIM43; the interaction may promote SLC2A3-mediated glucose transport to meet the energy needs of mesendoderm differentiation. In terms of tissue distribution, brain and osteoblastic cells (at protein level). Highly expressed in brain.

The protein resides in the cell membrane. Its subcellular location is the perikaryon. It is found in the cell projection. It catalyses the reaction D-glucose(out) = D-glucose(in). It carries out the reaction D-galactose(in) = D-galactose(out). Its activity is regulated as follows. Deoxyglucose transport is inhibited by D-glucose, D-galactose and maltose. Galactose transport is inhibited by D-glucose and maltose. Facilitative glucose transporter. Can also mediate the uptake of various other monosaccharides across the cell membrane. Mediates the uptake of glucose, 2-deoxyglucose, galactose, mannose, xylose and fucose, and probably also dehydroascorbate. Does not mediate fructose transport. Required for mesendoderm differentiation. The protein is Solute carrier family 2, facilitated glucose transporter member 3 of Rattus norvegicus (Rat).